The sequence spans 447 residues: GA-binding protein subunit beta-2 (447 aa).

5 ANK repeats span residues 5-34, 37-66, 70-99, 103-132, and 136-166; these read DLGK…PFTT, LGTS…SRDA, VDRT…DVNA, LKMT…DVHA, and FDKS…QVNA. At Ser-253 the chain carries Phosphoserine. Residues 345 to 395 adopt a coiled-coil conformation; sequence EESKEGTERELLQQRLQEANRRAQEYRHQLLKKEQEAEQYRLRLEAMARQQ. The segment at 418–447 is disordered; the sequence is REMEERETEVTGAVGTAEPHTGVSMETVST.

Heterotetramer of two alpha and two beta subunits. The C-terminal is necessary for the formation of a heterotetrameric GABP-alpha-2/beta-2 complex, and also facilitates homotypic dimerization. Interacts with ADGRB2.

Its subcellular location is the nucleus. Functionally, may function as transcription factor capable of interacting with purine rich repeats (GA repeats). This Bos taurus (Bovine) protein is GA-binding protein subunit beta-2 (GABPB2).